Consider the following 202-residue polypeptide: Protein EMBRYO DEFECTIVE 514 (202 aa).

Disordered stretches follow at residues 1–69 and 168–202; these read MAEE…PVKL and MKTP…RFRR. N-acetylalanine is present on Ala-2. 2 stretches are compositionally biased toward basic and acidic residues: residues 33-42 and 51-65; these read ETGDEKRERE and GESK…EKSG. Over residues 174–202 the composition is skewed to gly residues; that stretch reads NGNGHGGGRGGGGGRRGGRGGGRGGRFRR.

In terms of tissue distribution, expressed in leaves, flowers and embryos at globular stage.

The protein resides in the nucleus. May play a role in ribosome biogenesis and in determining the rate of cell division. Involved in a process essential for nuclear and nucleolar functions. This Arabidopsis thaliana (Mouse-ear cress) protein is Protein EMBRYO DEFECTIVE 514.